A 173-amino-acid polypeptide reads, in one-letter code: Lipid A deacylase PagL (173 aa).

The N-terminal stretch at 1-23 is a signal peptide; that stretch reads MKKLLPLAVLAALSSVHVASAQA. The Periplasmic segment spans residues 25–28; it reads DVSA. Residues 29 to 32 form a beta stranded membrane-spanning segment; the sequence is AVGA. A topological domain (periplasmic) is located at residue Thr-33. A beta stranded transmembrane segment spans residues 34–49; the sequence is GQSGMTYRLGLSWDWD. At 50–56 the chain is on the extracellular side; sequence KSWWQTS. Residues 57–71 form a beta stranded membrane-spanning segment; sequence TGRLTGYWDAGYTYW. Residues 72-73 lie on the Periplasmic side of the membrane; the sequence is EG. Residues 74 to 89 traverse the membrane as a beta stranded segment; that stretch reads GDEGAGKHSLSFAPVF. Residue Val-90 is a topological domain, extracellular. Residues 91 to 93 form a beta stranded membrane-spanning segment; that stretch reads YEF. The Periplasmic portion of the chain corresponds to 94–95; it reads AG. Residues 96 to 98 form a beta stranded membrane-spanning segment; it reads DSI. Over 99-100 the chain is Extracellular; sequence KP. The beta stranded transmembrane segment at 101–115 threads the bilayer; sequence FIEAGIGVAAFSGTR. Topologically, residues 116 to 117 are periplasmic; the sequence is VG. Residues 118 to 128 form a beta stranded membrane-spanning segment; it reads DQNLGSSLNFE. Over 129 to 138 the chain is Extracellular; the sequence is DRIGAGLKFA. The chain crosses the membrane as a beta stranded span at residues 139 to 148; that stretch reads NGQSVGVRAI. Active-site charge relay system residues include His-149, Ser-151, and Glu-163. Topologically, residues 149-173 are periplasmic; that stretch reads HYSNAGLKQPNDGIESYSLFYKIPI.

The protein belongs to the PagL family. As to quaternary structure, homodimer.

It localises to the cell outer membrane. The catalysed reaction is a 3-(acyloxy)acyl derivative of bacterial toxin + H2O = a 3-hydroxyacyl derivative of bacterial toxin + a fatty acid + H(+). With respect to regulation, decreased activity at low temperatures (15 or 21 degrees Celsius). Functionally, has lipid A 3-O-deacylase activity. Hydrolyzes the ester bond at the 3 position of lipid A, a bioactive component of lipopolysaccharide (LPS), thereby releasing the primary fatty acyl moiety. Lacks fatty acyl chain-length specificity as removes both 3-OH C10 and 3-OH C14 fatty acids from lipid A. The sequence is that of Lipid A deacylase PagL from Pseudomonas aeruginosa (strain ATCC 15692 / DSM 22644 / CIP 104116 / JCM 14847 / LMG 12228 / 1C / PRS 101 / PAO1).